A 1483-amino-acid polypeptide reads, in one-letter code: Guanylyl cyclase, membrane (1483 aa).

6 consecutive transmembrane segments (helical) span residues 50-70, 143-163, 168-188, 198-218, 219-239, and 242-262; these read ISII…YISP, FILR…TFTA, LWKL…LIFE, MVLL…PSML, ASGG…QIAG, and MVLL…ISRF. The interval 323–376 is disordered; sequence KKDEESNLTGKKQSKVVVSPPPPPTAAAPQQQDNEISTPQNSRKIVDPQSPSSL. The segment covering 355–376 has biased composition (polar residues); that stretch reads DNEISTPQNSRKIVDPQSPSSL. A Guanylate cyclase 1 domain is found at 395–517; sequence TVLFCEIVNF…DTINTSSRMA (123 aa). Disordered stretches follow at residues 598–619 and 672–838; these read NNTI…THPN and LTSP…GDDF. Residues 610–619 are compositionally biased toward polar residues; sequence GSATGPTHPN. Low complexity-rich tracts occupy residues 672-684, 693-712, and 720-765; these read LTSP…PQQS, SPRL…SSST, and NNNN…NNNN. Residues 772 to 786 are compositionally biased toward polar residues; sequence SPISQNTTPTGSLSL. 6 helical membrane passes run 907-927, 982-1002, 1016-1036, 1040-1060, 1061-1081, and 1094-1114; these read ILAS…VDYF, IITG…YVVS, VVMV…SVPP, IPLD…CYNF, SGIK…FIEI, and IYLS…ITSY. The Guanylate cyclase 2 domain maps to 1168–1296; that stretch reads TIFLSDIVGF…ESVQITQQME (129 aa). Asp-1173, Ile-1174, and Asp-1217 together coordinate Mg(2+). Disordered regions lie at residues 1348–1369 and 1393–1483; these read QPEV…SLQY and NQND…SESS. The segment covering 1354-1369 has biased composition (polar residues); it reads RSVSVSKSNFGGSLQY. Residues 1405–1416 show a composition bias toward low complexity; the sequence is NENGNESSSSNI. A compositionally biased stretch (acidic residues) spans 1432–1444; that stretch reads NEDDESSYEDDQE. Residues 1446–1465 are compositionally biased toward low complexity; the sequence is NQYLNNSENNKNNNNNSNQI.

Belongs to the adenylyl cyclase class-4/guanylyl cyclase family. In terms of assembly, homodimer. Mg(2+) is required as a cofactor.

The protein resides in the membrane. It catalyses the reaction GTP = 3',5'-cyclic GMP + diphosphate. Its activity is regulated as follows. Activated by guanosine 5'-3-O-(thio)triphosphate (GTPgammaS). Inhibited by calcium. In terms of biological role, synthesizes cyclic GMP (cGMP) from GTP, after activation by heterotrimeric or monomeric G proteins. Involved in chemotaxis. The protein is Guanylyl cyclase, membrane (gca) of Dictyostelium discoideum (Social amoeba).